The primary structure comprises 399 residues: Calsequestrin-2 (399 aa).

The first 19 residues, 1 to 19 (MKRTHLFIVGIYFLSSCRA), serve as a signal peptide directing secretion. Tyrosine 282 carries the post-translational modification Phosphotyrosine. An N-linked (GlcNAc...) asparagine glycan is attached at asparagine 335. The disordered stretch occupies residues 365–399 (VLSGKINTEDDDEDDDDDDNSDEEDNDDSDDDDDE). Over residues 373-399 (EDDDEDDDDDDNSDEEDNDDSDDDDDE) the composition is skewed to acidic residues. Phosphoserine is present on residues serine 385 and serine 393.

This sequence belongs to the calsequestrin family. Monomer, homodimer and homooligomer. Mostly monomeric in the absence of calcium. Forms higher oligomers in a calcium-dependent manner. Dimers associate to form tetramers, that then form linear homomer chains. Interacts with ASPH and TRDN. Phosphorylation in the C-terminus, probably by CK2, moderately increases calcium buffering capacity. Post-translationally, N-glycosylated.

It is found in the sarcoplasmic reticulum lumen. Its function is as follows. Calsequestrin is a high-capacity, moderate affinity, calcium-binding protein and thus acts as an internal calcium store in muscle. Calcium ions are bound by clusters of acidic residues at the protein surface, especially at the interface between subunits. Can bind around 60 Ca(2+) ions. Regulates the release of lumenal Ca(2+) via the calcium release channel RYR2; this plays an important role in triggering muscle contraction. Plays a role in excitation-contraction coupling in the heart and in regulating the rate of heart beats. This is Calsequestrin-2 (CASQ2) from Homo sapiens (Human).